The chain runs to 429 residues: GTPase Obg (429 aa).

The region spanning 1-158 (MFYDTAKIYV…RWLLLELKLL (158 aa)) is the Obg domain. An OBG-type G domain is found at 159 to 329 (ADVGLVGYPN…LIYRLWEIIS (171 aa)). GTP contacts are provided by residues 165–172 (GYPNAGKS), 190–194 (FTTLT), 212–215 (DIPG), 282–285 (NKMD), and 310–312 (SAL). The Mg(2+) site is built by Ser172 and Thr192. In terms of domain architecture, OCT spans 344–421 (IKEQPEEGFV…IGKFEFYFVD (78 aa)).

The protein belongs to the TRAFAC class OBG-HflX-like GTPase superfamily. OBG GTPase family. As to quaternary structure, monomer. Requires Mg(2+) as cofactor.

Its subcellular location is the cytoplasm. Its function is as follows. An essential GTPase which binds GTP, GDP and possibly (p)ppGpp with moderate affinity, with high nucleotide exchange rates and a fairly low GTP hydrolysis rate. Plays a role in control of the cell cycle, stress response, ribosome biogenesis and in those bacteria that undergo differentiation, in morphogenesis control. This chain is GTPase Obg, found in Carboxydothermus hydrogenoformans (strain ATCC BAA-161 / DSM 6008 / Z-2901).